The chain runs to 80 residues: SPI-1 type 3 secretion system needle filament protein (80 aa).

This sequence belongs to the SctF family. As to quaternary structure, the core secretion machinery of the T3SS is composed of approximately 20 different proteins, including cytoplasmic components, a base, an export apparatus and a needle. This subunit polymerizes and forms the helical needle filament. Interacts with the needle tip protein SipD/SctA. Interacts with the needle adapter protein PrgJ/SctI, the secretin InvG/SctC and the minor export apparatus protein SpaP/SctR. In vitro, the needle protomer refolds spontaneously to extend the needle from the distal end.

The protein resides in the secreted. It is found in the cell surface. Its activity is regulated as follows. Binding of bile salts, including deoxycholate, to the PrgI:SipD interface may inhibit the T3SS function. Its function is as follows. Component of the type III secretion system (T3SS), also called injectisome, which is used to inject bacterial effector proteins into eukaryotic host cells. PrgI/SctF1 forms the external needle filament that protrudes from the bacterial surface. Is probably involved in the transduction of an activating signal, thought to be mediated by the distal tip of the needle filament, to the secretion machine. Required for invasion of epithelial cells. Required for the secretion of the effector protein SptP. In terms of biological role, during infection, can induce innate immune responses. The needle proteins interact with host TLR2 or TLR4, and induce signaling by NF-kappa-B and/or AP-1. This activation is MyD88 dependent and results in increased expression of cytokines, including TNF-alpha, IL-6 and IL-8. In Salmonella typhimurium (strain LT2 / SGSC1412 / ATCC 700720), this protein is SPI-1 type 3 secretion system needle filament protein.